A 521-amino-acid chain; its full sequence is GMP synthase [glutamine-hydrolyzing] (521 aa).

Positions 5–203 (KILILDFGSQ…VHEICGCGND (199 aa)) constitute a Glutamine amidotransferase type-1 domain. The active-site Nucleophile is C82. Active-site residues include H177 and E179. The 193-residue stretch at 204–396 (WNMPDYISEA…LGLPHDMVYR (193 aa)) folds into the GMPS ATP-PPase domain. Position 231–237 (231–237 (SGGVDSS)) interacts with ATP.

As to quaternary structure, homodimer.

The catalysed reaction is XMP + L-glutamine + ATP + H2O = GMP + L-glutamate + AMP + diphosphate + 2 H(+). The protein operates within purine metabolism; GMP biosynthesis; GMP from XMP (L-Gln route): step 1/1. Catalyzes the synthesis of GMP from XMP. This Azoarcus sp. (strain BH72) protein is GMP synthase [glutamine-hydrolyzing].